The primary structure comprises 475 residues: UDP-N-acetylmuramate--L-alanine ligase (475 aa).

112 to 118 (GTHGKTT) is an ATP binding site.

This sequence belongs to the MurCDEF family.

Its subcellular location is the cytoplasm. The enzyme catalyses UDP-N-acetyl-alpha-D-muramate + L-alanine + ATP = UDP-N-acetyl-alpha-D-muramoyl-L-alanine + ADP + phosphate + H(+). It functions in the pathway cell wall biogenesis; peptidoglycan biosynthesis. In terms of biological role, cell wall formation. The chain is UDP-N-acetylmuramate--L-alanine ligase from Methylobacillus flagellatus (strain ATCC 51484 / DSM 6875 / VKM B-1610 / KT).